The sequence spans 556 residues: Membrane protein insertase YidC (556 aa).

5 helical membrane-spanning segments follow: residues 6 to 26 (IVLY…WQID), 332 to 352 (LDLT…FSLM), 358 to 378 (VVGN…LAFY), 428 to 448 (LGGC…YWVL), and 501 to 521 (VMMF…SGLV).

The protein belongs to the OXA1/ALB3/YidC family. Type 1 subfamily. In terms of assembly, interacts with the Sec translocase complex via SecD. Specifically interacts with transmembrane segments of nascent integral membrane proteins during membrane integration.

The protein resides in the cell inner membrane. Functionally, required for the insertion and/or proper folding and/or complex formation of integral membrane proteins into the membrane. Involved in integration of membrane proteins that insert both dependently and independently of the Sec translocase complex, as well as at least some lipoproteins. Aids folding of multispanning membrane proteins. The polypeptide is Membrane protein insertase YidC (Legionella pneumophila (strain Corby)).